We begin with the raw amino-acid sequence, 201 residues long: FMN reductase (NADH) RutF (201 aa).

The interval A169–A201 is disordered.

Belongs to the non-flavoprotein flavin reductase family. RutF subfamily.

The enzyme catalyses FMNH2 + NAD(+) = FMN + NADH + 2 H(+). In terms of biological role, catalyzes the reduction of FMN to FMNH2 which is used to reduce pyrimidine by RutA via the Rut pathway. This is FMN reductase (NADH) RutF from Methylorubrum extorquens (strain ATCC 14718 / DSM 1338 / JCM 2805 / NCIMB 9133 / AM1) (Methylobacterium extorquens).